The chain runs to 502 residues: Lysine--tRNA ligase (502 aa).

Mg(2+) is bound by residues Glu-413 and Glu-420.

This sequence belongs to the class-II aminoacyl-tRNA synthetase family. In terms of assembly, homodimer. It depends on Mg(2+) as a cofactor.

The protein resides in the cytoplasm. It carries out the reaction tRNA(Lys) + L-lysine + ATP = L-lysyl-tRNA(Lys) + AMP + diphosphate. This is Lysine--tRNA ligase (lysS) from Haemophilus influenzae (strain ATCC 51907 / DSM 11121 / KW20 / Rd).